The sequence spans 923 residues: Protocadherin gamma-B4 (923 aa).

Positions 1–30 (MGSGAGELGRAERLPVLFLFLLSLFCPALC) are cleaved as a signal peptide. Cadherin domains are found at residues 31–133 (EQIR…TPKF), 134–242 (TQNS…APVF), 243–345 (SQDI…APEV), 346–450 (IFQS…APVF), 451–560 (SQSS…APRV), and 568–673 (DGSA…LPDI). Over 31 to 689 (EQIRYRIPEE…SDLEAELQFY (659 aa)) the chain is Extracellular. 2 N-linked (GlcNAc...) asparagine glycosylation sites follow: N417 and N543. Residues 690-710 (LVVALALISVLFLVAMILAIA) form a helical membrane-spanning segment. Over 711 to 923 (LRLRRSSSPA…KKKSGKKEKK (213 aa)) the chain is Cytoplasmic. 2 disordered regions span residues 797 to 832 (SHQQ…WPNN) and 893 to 923 (ATLT…KEKK). A compositionally biased stretch (basic residues) spans 913 to 923 (NKKKSGKKEKK).

It is found in the cell membrane. Potential calcium-dependent cell-adhesion protein. May be involved in the establishment and maintenance of specific neuronal connections in the brain. The chain is Protocadherin gamma-B4 (PCDHGB4) from Pan troglodytes (Chimpanzee).